The chain runs to 43 residues: Large ribosomal subunit protein bL32 (43 aa).

This sequence belongs to the bacterial ribosomal protein bL32 family.

This chain is Large ribosomal subunit protein bL32 (rpmF), found in Carsonella ruddii (strain PV).